The following is a 311-amino-acid chain: GTP cyclohydrolase FolE2 (311 aa).

This sequence belongs to the GTP cyclohydrolase IV family.

The catalysed reaction is GTP + H2O = 7,8-dihydroneopterin 3'-triphosphate + formate + H(+). Its pathway is cofactor biosynthesis; 7,8-dihydroneopterin triphosphate biosynthesis; 7,8-dihydroneopterin triphosphate from GTP: step 1/1. Functionally, converts GTP to 7,8-dihydroneopterin triphosphate. The polypeptide is GTP cyclohydrolase FolE2 (Hydrogenovibrio crunogenus (strain DSM 25203 / XCL-2) (Thiomicrospira crunogena)).